Here is a 316-residue protein sequence, read N- to C-terminus: Ester hydrolase C11orf54 homolog (316 aa).

Zn(2+)-binding residues include His267, His269, and His279.

As to quaternary structure, monomer. Requires Zn(2+) as cofactor.

Its subcellular location is the nucleus. It localises to the cytoplasm. Exhibits ester hydrolase activity on the substrate p-nitrophenyl acetate, in vitro. May regulate DNA damage and repair by regulating HIF1A degradation via chaperone-mediated autophagy (CMA). The chain is Ester hydrolase C11orf54 homolog from Xenopus laevis (African clawed frog).